A 672-amino-acid polypeptide reads, in one-letter code: Probable urocanate hydratase (672 aa).

NAD(+) is bound by residues 128-129 (GG), glutamine 206, 253-255 (GMS), glutamate 273, 318-319 (NV), 340-344 (QTSLH), 351-352 (YY), tyrosine 400, and glycine 592.

The protein belongs to the urocanase family. The cofactor is NAD(+).

It carries out the reaction 4-imidazolone-5-propanoate = trans-urocanate + H2O. It functions in the pathway amino-acid degradation; L-histidine degradation into L-glutamate; N-formimidoyl-L-glutamate from L-histidine: step 2/3. In Dictyostelium discoideum (Social amoeba), this protein is Probable urocanate hydratase (uroc1).